The sequence spans 485 residues: E3 ubiquitin-protein ligase TRIM34A (485 aa).

The RING-type zinc finger occupies 15–59 (CPVCQELLTKALSLGCGHRVCQACLITKKNAVINPREKSSCPVCG). The segment at 91–132 (TKRDLCVHHGEKLLLFCKEDKKAICWVCERSQEHRGHHTFLW) adopts a B box-type zinc-finger fold. Cysteine 96, histidine 99, cysteine 118, and histidine 124 together coordinate Zn(2+). Positions 136–170 (VRECQENLQKALTRLRKEQEKVETLEADIKEDRLS) form a coiled coil. The region spanning 282–485 (LSGMLQKFRE…APMTLCPLNS (204 aa)) is the B30.2/SPRY domain.

It belongs to the TRIM/RBCC family. As to quaternary structure, homotrimer. Interacts (via B-box and SPRY domain) with TRIM5.

The protein resides in the cytoplasm. It is found in the mitochondrion. The enzyme catalyses S-ubiquitinyl-[E2 ubiquitin-conjugating enzyme]-L-cysteine + [acceptor protein]-L-lysine = [E2 ubiquitin-conjugating enzyme]-L-cysteine + N(6)-ubiquitinyl-[acceptor protein]-L-lysine.. It participates in protein modification; protein ubiquitination. Functions as antiviral protein and contributes to the defense against retroviral infections. Acts as a capsid-specific restriction factor with the help of TRIM5 and prevents infection from non-host-adapted retroviruses. During influenza A virus infection, promotes programmed cell death by targeting ZBP1 for 'Lys-63'-linked polyubiquitination. In turn, promotes ZBP1 recruitment of RIPK3 to mediate virus-induced programmed necrosis. Negatively regulates the function of mitochondria by enhancing mitochondrial depolarization leading to cytochrome c release and mitochondria-dependent apoptosis. Also promotes the formation of multinucleated giant cells by means of cell fusion and phagocytosis in epithelial cells. Plays an essential role in sustaining the integrity of the inner mucus layer in the colon by controlling the exocytosis of the major component of colonic mucus MUC2 from colonic goblet cells. This Mus musculus (Mouse) protein is E3 ubiquitin-protein ligase TRIM34A.